The following is a 342-amino-acid chain: tRNA N6-adenosine threonylcarbamoyltransferase (342 aa).

His111 and His115 together coordinate Fe cation. Residues 134-138, Asp167, Gly180, and Asn277 each bind substrate; that span reads LVSGG. A Fe cation-binding site is contributed by Asp305.

Belongs to the KAE1 / TsaD family. Fe(2+) serves as cofactor.

Its subcellular location is the cytoplasm. The catalysed reaction is L-threonylcarbamoyladenylate + adenosine(37) in tRNA = N(6)-L-threonylcarbamoyladenosine(37) in tRNA + AMP + H(+). In terms of biological role, required for the formation of a threonylcarbamoyl group on adenosine at position 37 (t(6)A37) in tRNAs that read codons beginning with adenine. Is involved in the transfer of the threonylcarbamoyl moiety of threonylcarbamoyl-AMP (TC-AMP) to the N6 group of A37, together with TsaE and TsaB. TsaD likely plays a direct catalytic role in this reaction. This chain is tRNA N6-adenosine threonylcarbamoyltransferase, found in Histophilus somni (strain 2336) (Haemophilus somnus).